The primary structure comprises 142 residues: Transcriptional regulator MraZ (142 aa).

SpoVT-AbrB domains lie at 5 to 51 (ASSL…PRPV) and 77 to 120 (ASDV…DAAR).

This sequence belongs to the MraZ family. Forms oligomers.

The protein localises to the cytoplasm. It localises to the nucleoid. The polypeptide is Transcriptional regulator MraZ (Herminiimonas arsenicoxydans).